Here is a 757-residue protein sequence, read N- to C-terminus: Endonuclease MutS2 (757 aa).

321 to 328 contributes to the ATP binding site; that stretch reads GPNMGGKT. A Smr domain is found at 681-756; that stretch reads IDIRGMTVEE…GTGVTVVEVK (76 aa).

Belongs to the DNA mismatch repair MutS family. MutS2 subfamily. As to quaternary structure, homodimer. Binds to stalled ribosomes, contacting rRNA. Interacts with MutL.

Nuclease activity is stimulated by interaction with MutL and inhibited in the presence of non-hydrolytic ATP (ADPnP). ATPase activity is stimulated by DNA. Its function is as follows. Endonuclease that is involved in the suppression of homologous recombination and thus may have a key role in the control of bacterial genetic diversity. Has ATPase activity. Binds to DNA. Acts as a ribosome collision sensor, splitting the ribosome into its 2 subunits. Detects stalled/collided 70S ribosomes which it binds and splits by an ATP-hydrolysis driven conformational change. Acts upstream of the ribosome quality control system (RQC), a ribosome-associated complex that mediates the extraction of incompletely synthesized nascent chains from stalled ribosomes and their subsequent degradation. Probably generates substrates for RQC. The polypeptide is Endonuclease MutS2 (Thermotoga maritima (strain ATCC 43589 / DSM 3109 / JCM 10099 / NBRC 100826 / MSB8)).